The following is a 313-amino-acid chain: Putative zinc finger protein 077L (313 aa).

Residues 174-199 (CFSITKGIECPHYSCTYIHNYSQIEH) form a C3H1-type zinc finger. A disordered region spans residues 294 to 313 (SDDSDSENNDEDDDWKIDLF). The segment covering 296–313 (DSDSENNDEDDDWKIDLF) has biased composition (acidic residues).

It belongs to the IIV-6 077L family.

This Invertebrate iridescent virus 6 (IIV-6) protein is Putative zinc finger protein 077L.